A 575-amino-acid chain; its full sequence is DNA-directed RNA polymerase subunit beta' (575 aa).

The protein belongs to the RNA polymerase beta' chain family. As to quaternary structure, in plastids the minimal PEP RNA polymerase catalytic core is composed of four subunits: alpha, beta, beta', and beta''. When a (nuclear-encoded) sigma factor is associated with the core the holoenzyme is formed, which can initiate transcription.

The protein localises to the plastid. It localises to the apicoplast. The enzyme catalyses RNA(n) + a ribonucleoside 5'-triphosphate = RNA(n+1) + diphosphate. Its function is as follows. DNA-dependent RNA polymerase catalyzes the transcription of DNA into RNA using the four ribonucleoside triphosphates as substrates. The sequence is that of DNA-directed RNA polymerase subunit beta' (rpoC1) from Plasmodium falciparum (isolate 3D7).